The primary structure comprises 195 residues: Imidazoleglycerol-phosphate dehydratase (195 aa).

This sequence belongs to the imidazoleglycerol-phosphate dehydratase family.

The protein localises to the cytoplasm. The catalysed reaction is D-erythro-1-(imidazol-4-yl)glycerol 3-phosphate = 3-(imidazol-4-yl)-2-oxopropyl phosphate + H2O. It participates in amino-acid biosynthesis; L-histidine biosynthesis; L-histidine from 5-phospho-alpha-D-ribose 1-diphosphate: step 6/9. In Thermotoga neapolitana (strain ATCC 49049 / DSM 4359 / NBRC 107923 / NS-E), this protein is Imidazoleglycerol-phosphate dehydratase.